Here is a 587-residue protein sequence, read N- to C-terminus: Vesicular glutamate transporter 2.2 (587 aa).

The Cytoplasmic portion of the chain corresponds to 1–71; sequence MDTVKERVLA…CTCFGLPRRY (71 aa). Residues 72-92 form a helical membrane-spanning segment; sequence IIAIMSGLGFCISFGIRCNLG. Topologically, residues 93-125 are vesicular; it reads VAIVDMVNNSTIHKGGKIIIKGKAKFNWDPETV. Asn100 and Asn101 each carry an N-linked (GlcNAc...) asparagine glycan. A helical transmembrane segment spans residues 126–146; that stretch reads GMIHGSFFWGYTVTQIPGGYI. Over 147-149 the chain is Cytoplasmic; it reads SSR. Residues 150 to 170 traverse the membrane as a helical segment; sequence LAANRVFGAAILLTSTLNMFI. Residues 171–180 lie on the Vesicular side of the membrane; sequence PSAARVHYGC. The helical transmembrane segment at 181–203 threads the bilayer; it reads VMFVRILQGLVEGVTYPACHGIW. The Cytoplasmic portion of the chain corresponds to 204–217; it reads SKWAPPLERSRLAT. Residues 218–238 form a helical membrane-spanning segment; it reads TSFCGSYAGAVVAMPLAGILV. The Vesicular portion of the chain corresponds to 239 to 245; the sequence is QYSGWSS. Residues 246–266 traverse the membrane as a helical segment; it reads VFYIYGSFGIVWYMFWILVSY. Topologically, residues 267–311 are cytoplasmic; sequence ESPADHPTITDEERTYIEESIGESAKLLGAMEKYKTPWRKFFTSM. Residues 312 to 332 form a helical membrane-spanning segment; it reads PVYAIIVANFCRSWTFYLLLI. The Vesicular portion of the chain corresponds to 333–350; it reads SQPAYFEEVFGFEISKVG. A helical transmembrane segment spans residues 351–371; that stretch reads MVSALPHLVMTIIVPIGGQLA. The Cytoplasmic segment spans residues 372–387; the sequence is DYLRSKNILTTTTVRK. The chain crosses the membrane as a helical span at residues 388 to 408; sequence IMNCGGFGMEATLLLVVGFSH. Topologically, residues 409-410 are vesicular; sequence SK. The chain crosses the membrane as a helical span at residues 411-431; that stretch reads GVAISFLVLAVGFSGFAISGF. Over 432-444 the chain is Cytoplasmic; it reads NVNHLDIAPRYAS. The helical transmembrane segment at 445-465 threads the bilayer; the sequence is ILMGISNGVGTLSGMVCPLIV. Residues 466–479 lie on the Vesicular side of the membrane; that stretch reads GAMTKNKTREEWQN. Asn471 is a glycosylation site (N-linked (GlcNAc...) asparagine). Residues 480-500 traverse the membrane as a helical segment; the sequence is VFLIASLVHYGGVIFYGIFAS. Topologically, residues 501–587 are cytoplasmic; it reads GEKQPWADPE…ERTYTGDGYS (87 aa).

Belongs to the major facilitator superfamily. Sodium/anion cotransporter family. VGLUT subfamily. Expressed in spinal cord.

The protein localises to the cytoplasmic vesicle. The protein resides in the secretory vesicle. It localises to the synaptic vesicle membrane. Its subcellular location is the membrane. It is found in the synapse. The protein localises to the synaptosome. The protein resides in the cell membrane. The catalysed reaction is L-glutamate(out) = L-glutamate(in). It carries out the reaction 3 Na(+)(out) + phosphate(out) = 3 Na(+)(in) + phosphate(in). It catalyses the reaction phosphate(in) = phosphate(out). The enzyme catalyses K(+)(in) + H(+)(out) = K(+)(out) + H(+)(in). The catalysed reaction is chloride(in) = chloride(out). Its activity is regulated as follows. Chloride channel activity is allosterically activated by lumenal H(+) and Cl(-) leading to synaptic vesicles acidification. The L-glutamate transport activity is allosterically activated by lumenal H(+) and Cl(-). The allosteric requirement for H(+) efficiently prevents non-vesicular efflux across the plasma membrane. The L-glutamate uniporter activity exhibits a biphasic dependence on chloride concentration. Functionally, multifunctional transporter that transports L-glutamate as well as multiple ions such as chloride, proton, potassium, sodium and phosphate. At the synaptic vesicle membrane, mainly functions as a uniporter which transports preferentially L-glutamate but also, phosphate from the cytoplasm into synaptic vesicles at presynaptic nerve terminals of excitatory neural cells. The L-glutamate or phosphate uniporter activity is electrogenic and is driven by the proton electrochemical gradient, mainly by the electrical gradient established by the vacuolar H(+)-ATPase across the synaptic vesicle membrane. In addition, functions as a chloride channel that allows a chloride permeation through the synaptic vesicle membrane therefore affects the proton electrochemical gradient and promotes synaptic vesicles acidification. Moreover, functions as a vesicular K(+)/H(+) antiport allowing to maintain the electrical gradient and to decrease chemical gradient and therefore sustain vesicular L-glutamate uptake. The vesicular H(+)/H(+) antiport activity is electroneutral. At the plasma membrane, following exocytosis, functions as a symporter of Na(+) and phosphate from the extracellular space to the cytoplasm allowing synaptic phosphate homeostasis regulation. The symporter activity is driven by an inside negative membrane potential and is electrogenic. Also involved in the regulation of retinal hyaloid vessel regression during postnatal development. May also play a role in the endocrine L-glutamatergic system of other tissues such as pineal gland and pancreas. The polypeptide is Vesicular glutamate transporter 2.2 (slc17a6a) (Danio rerio (Zebrafish)).